A 186-amino-acid chain; its full sequence is TATA-box-binding protein D (186 aa).

Tandem repeats lie at residues 10–86 (IENV…VEDL) and 101–179 (VQNI…HERL).

It belongs to the TBP family.

Its function is as follows. General factor that plays a role in the activation of archaeal genes transcribed by RNA polymerase. Binds specifically to the TATA box promoter element which lies close to the position of transcription initiation. The chain is TATA-box-binding protein D (tbpD) from Halobacterium salinarum (strain ATCC 700922 / JCM 11081 / NRC-1) (Halobacterium halobium).